A 102-amino-acid chain; its full sequence is ATP-dependent Clp protease adapter protein ClpS (102 aa).

Belongs to the ClpS family. As to quaternary structure, binds to the N-terminal domain of the chaperone ClpA.

In terms of biological role, involved in the modulation of the specificity of the ClpAP-mediated ATP-dependent protein degradation. The protein is ATP-dependent Clp protease adapter protein ClpS of Nitrosospira multiformis (strain ATCC 25196 / NCIMB 11849 / C 71).